Reading from the N-terminus, the 235-residue chain is Type III pantothenate kinase (235 aa).

Residue Asp6–Lys13 participates in ATP binding. Substrate-binding positions include Tyr81 and Gly88 to Arg91. Residue Asp90 is the Proton acceptor of the active site. Asp111 contacts K(+). Thr114 is a binding site for ATP. Thr166 contacts substrate.

Belongs to the type III pantothenate kinase family. Homodimer. Requires NH4(+) as cofactor. K(+) is required as a cofactor.

It is found in the cytoplasm. It carries out the reaction (R)-pantothenate + ATP = (R)-4'-phosphopantothenate + ADP + H(+). The protein operates within cofactor biosynthesis; coenzyme A biosynthesis; CoA from (R)-pantothenate: step 1/5. Catalyzes the phosphorylation of pantothenate (Pan), the first step in CoA biosynthesis. This chain is Type III pantothenate kinase, found in Cytophaga hutchinsonii (strain ATCC 33406 / DSM 1761 / CIP 103989 / NBRC 15051 / NCIMB 9469 / D465).